Here is an 86-residue protein sequence, read N- to C-terminus: MAEKRKYSRKYCKYTEAKVEFIDYKDTAMLKHALSERFKIMPRRLTGTSKKYQEMVEVAIKRARHVALIPYIVDRKEVINNPFEGL.

The protein belongs to the bacterial ribosomal protein bS18 family. As to quaternary structure, part of the 30S ribosomal subunit. Forms a tight heterodimer with protein bS6.

Its function is as follows. Binds as a heterodimer with protein bS6 to the central domain of the 16S rRNA, where it helps stabilize the platform of the 30S subunit. The protein is Small ribosomal subunit protein bS18 of Campylobacter jejuni subsp. jejuni serotype O:6 (strain 81116 / NCTC 11828).